A 1038-amino-acid polypeptide reads, in one-letter code: MAPYAPTDGISKLAIDQSKHFTEALKEALKSSADQQKVAAEKVSELVAGDANLNLGVVSQELRNALTGNDADAKVVAAHVVDDLMQKHAERVEAYLLPLLSVFLDLLGDKKPTVRPVAQEAALTIISSANKNSTIRILPILFDGLDRSKKWQTKKGALDLIAELSKVAPYQVGRCLPDIIPQVTDCMWDTRKEVKVAARDTMTKVCNVVGNMDIEPFIPALVSCLANPTEVPECTHKLASTTFVKTVEAPALAIMEPLLKRALAEGKTAVKRQAAVIIDNMCKLMDDPAEAQLFIPKLLPGLKKVIETQADPECREVATRAHETLFVAGGSMEVSEDELKVDYANIHKVVVESIAANPTAVKANIDSFVVDYVTGICYFLVVSRNFNKAVFEKEITTYIKAFMKPEEIKPLANEIRDRCFKENKSIFIEDVDCDEGIPDLCNCEFSLAYGGMILLNNARLRLKRGHRYGLCGPNGCGKSTLMRAISNGQLEGFPSRDELKTVFVEHNLQASEAELSVVDFILVDEDLKNTPRKEVEDTLAGVGFTAEMQAQGVGTLSGGWKMKLELARAMLQKADILLLDEPTNHLDVKNVAWLENYLTSLTNVTSIMVSHDSGFLDTVCTNIIHYETRKLKIYKGNLSKFVEQKPEAKAYYELESENVKFIFPEPGFLADIKNKGKPIIRLTNCSYQYPGTPKPSINNISVTCALSSRIAVLGPNGAGKSTLIKMLTGEVEPTSGQVWKHPSMRFAYVAQHAFHHIESHLDETANQYIQWRFQSGEDKELLAKETRKLSKEEKEHYKKPVNWEGEKRVLEEIVSRRKFKKSFEYELKWEKCPVDDNAWVPREKCEKWGWDKLLQIADDREAARANLQARPPTAIAVQKHLDCFGLGAEFGTHSRMRGLSGGQKVKVVLAAAMWLNPHILVLDEPTNYLDRDSLGALASAIKEFNGGVVMITHHNEFSSALTQETWNVEAGFLVIEGQQAEDKTKIEQKNEEEVTDAFGNVTKTKIKRKLTRKEKKAKDKARKEAEARGEYYSDSDEE.

HEAT repeat units follow at residues E93–K131, S133–Y170, R174–N211, D213–A249, M255–D287, and Q292–S331. Residue E406 participates in ADP binding. 2 ABC transporter domains span residues I426–L654 and I680–T995. Positions 716, 924, 927, and 953 each coordinate ADP. The tract at residues R1012–E1038 is disordered. The span at A1021 to Y1031 shows a compositional bias: basic and acidic residues.

The protein belongs to the ABC transporter superfamily. ABCF family. EF3 subfamily. In terms of assembly, monomer.

The protein localises to the cytoplasm. It catalyses the reaction ATP + H2O = ADP + phosphate + H(+). It functions in the pathway protein biosynthesis; polypeptide chain elongation. Functionally, ribosome-dependent ATPase that functions in cytoplasmic translation elongation. Required for the ATP-dependent release of deacylated tRNA from the ribosomal E-site during protein biosynthesis. Stimulates the eEF1A-dependent binding of aminoacyl-tRNA to the ribosomal A-site, which has reduced affinity for tRNA as long as the E-site is occupied. Assists translation termination by stimulating the release of nascent protein from the ribosome by release factors. In Phytophthora infestans (strain T30-4) (Potato late blight agent), this protein is Elongation factor 3.